Consider the following 332-residue polypeptide: Cytoplasmic phosphatidylinositol transfer protein 1 (332 aa).

Phosphoserine occurs at positions 119, 122, 270, and 274. Low complexity predominate over residues 272–281 (PSSAPSTPLS). The tract at residues 272–332 (PSSAPSTPLS…SEKPCRPKSE (61 aa)) is disordered. The residue at position 278 (Thr-278) is a Phosphothreonine.

Belongs to the PtdIns transfer protein family. PI transfer class IIB subfamily. Widely expressed in brain, with expression in the gray matters of pre- and postnatal brains. In terms of tissue distribution, weakly expressed in brain and is rather confined to the embryonic stage.

The protein localises to the cytoplasm. It is found in the nucleus. The catalysed reaction is a 1,2-diacyl-sn-glycero-3-phospho-(1D-myo-inositol)(in) = a 1,2-diacyl-sn-glycero-3-phospho-(1D-myo-inositol)(out). The enzyme catalyses a 1,2-diacyl-sn-glycero-3-phosphate(in) = a 1,2-diacyl-sn-glycero-3-phosphate(out). Catalyzes the transfer of phosphatidylinositol (PI) and phosphatidic acid (PA) between membranes. Binds PA derived from the phospholipase D signaling pathway and among the cellular PA species, preferably binds to the C16:0/16:1 and C16:1/18:1 PA species. Its function is as follows. Specifically binds to phosphatidylinositol but not to other phospholipids and may play a role in the phosphoinositide-mediated signaling in the neural development. The polypeptide is Cytoplasmic phosphatidylinositol transfer protein 1 (Pitpnc1) (Mus musculus (Mouse)).